The sequence spans 515 residues: Signal transduction histidine-protein kinase/phosphatase MprB (515 aa).

Topologically, residues 1–24 (MTLPPQPSRLKPPRNTSSLSLRWR) are cytoplasmic. Residues 25–45 (VMLLAMSMVAMVVVLMSVAVY) traverse the membrane as a helical segment. At 46 to 165 (AVVSRALYDD…TGQVLGRLGT (120 aa)) the chain is on the extracellular side. The chain crosses the membrane as a helical span at residues 166–186 (VLLIVGGVGVAVAAIAGGMVA). The HAMP domain maps to 187-239 (RAGLRPVGRLTQAAERVARTDDLRPIPVFGSDELARLTEAFNMMLRALTESRE). At 187–515 (RAGLRPVGRL…GKSRSASKEL (329 aa)) the chain is on the cytoplasmic side. The Histidine kinase domain maps to 247–467 (DAGHELRTPL…SFYVMLPGRP (221 aa)). Phosphohistidine; by autocatalysis is present on H250. A disordered region spans residues 468-515 (LTPGGNGTAPVPAAQFDPDMRSAGSRADRRVIKNTETNGKSRSASKEL).

Mg(2+) serves as cofactor. Mn(2+) is required as a cofactor. Autophosphorylated.

It localises to the cell membrane. It catalyses the reaction ATP + protein L-histidine = ADP + protein N-phospho-L-histidine.. Its function is as follows. Member of the two-component regulatory system MprB/MprA which contributes to maintaining a balance among several systems involved in stress resistance and is required for establishment and maintenance of persistent infection in the host. In response to environmental signals MprB acts both as a membrane-associated protein kinase that undergoes autophosphorylation and subsequently transfers the phosphate to MprA, and a protein phosphatase that dephosphorylates phospho-MprA. In Mycobacterium sp. (strain JLS), this protein is Signal transduction histidine-protein kinase/phosphatase MprB (mprB).